We begin with the raw amino-acid sequence, 684 residues long: Multisite-specific tRNA:(cytosine-C(5))-methyltransferase (684 aa).

A compositionally biased stretch (basic residues) spans 1-12 (MARRKNFKKGNK). The segment at 1–24 (MARRKNFKKGNKKTFGARDDSRAQ) is disordered. Residues 173–179 (CAAPGSK), aspartate 202, aspartate 229, and aspartate 257 contribute to the S-adenosyl-L-methionine site. Catalysis depends on cysteine 310, which acts as the Nucleophile. Threonine 426 carries the phosphothreonine modification. Phosphoserine is present on serine 431. Positions 650–684 (KATPSAEEKEKEKETTESPAETTTGTSTEAPSAAN) are disordered. Positions 655 to 665 (AEEKEKEKETT) are enriched in basic and acidic residues. The span at 666-684 (ESPAETTTGTSTEAPSAAN) shows a compositional bias: low complexity. The residue at position 667 (serine 667) is a Phosphoserine.

Belongs to the class I-like SAM-binding methyltransferase superfamily. RsmB/NOP family. TRM4 subfamily.

It localises to the nucleus. Its subcellular location is the nucleolus. The enzyme catalyses cytidine(34) in tRNA precursor + S-adenosyl-L-methionine = 5-methylcytidine(34) in tRNA precursor + S-adenosyl-L-homocysteine + H(+). It carries out the reaction cytidine(40) in tRNA precursor + S-adenosyl-L-methionine = 5-methylcytidine(40) in tRNA precursor + S-adenosyl-L-homocysteine + H(+). It catalyses the reaction cytidine(48) in tRNA + S-adenosyl-L-methionine = 5-methylcytidine(48) in tRNA + S-adenosyl-L-homocysteine + H(+). The catalysed reaction is cytidine(49) in tRNA + S-adenosyl-L-methionine = 5-methylcytidine(49) in tRNA + S-adenosyl-L-homocysteine + H(+). Methylates cytosine to m5C at several positions in different tRNAs and pre-tRNAs containing intron. Able to modify tRNAs at all four positions (34, 40, 48 and 49) at which m5C has been found in tRNAs. May be involved in ribosome biogenesis as its disruption leads to increased sensitivity to the antibiotic paromomycin. In Saccharomyces cerevisiae (strain ATCC 204508 / S288c) (Baker's yeast), this protein is Multisite-specific tRNA:(cytosine-C(5))-methyltransferase (NCL1).